The following is a 122-amino-acid chain: Large ribosomal subunit protein uL14 (122 aa).

This sequence belongs to the universal ribosomal protein uL14 family. Part of the 50S ribosomal subunit. Forms a cluster with proteins L3 and L19. In the 70S ribosome, L14 and L19 interact and together make contacts with the 16S rRNA in bridges B5 and B8.

Its function is as follows. Binds to 23S rRNA. Forms part of two intersubunit bridges in the 70S ribosome. The chain is Large ribosomal subunit protein uL14 from Leptothrix cholodnii (strain ATCC 51168 / LMG 8142 / SP-6) (Leptothrix discophora (strain SP-6)).